The primary structure comprises 545 residues: Ribulokinase (545 aa).

This sequence belongs to the ribulokinase family.

It carries out the reaction D-ribulose + ATP = D-ribulose 5-phosphate + ADP + H(+). The catalysed reaction is L-ribulose + ATP = L-ribulose 5-phosphate + ADP + H(+). It participates in carbohydrate degradation; L-arabinose degradation via L-ribulose; D-xylulose 5-phosphate from L-arabinose (bacterial route): step 2/3. The chain is Ribulokinase from Staphylococcus aureus (strain MSSA476).